The chain runs to 546 residues: Chaperonin GroEL 3 (546 aa).

ATP is bound by residues 30-33 (TLGP), lysine 51, 87-91 (DGTTT), glycine 415, and aspartate 496.

It belongs to the chaperonin (HSP60) family. In terms of assembly, forms a cylinder of 14 subunits composed of two heptameric rings stacked back-to-back. Interacts with the co-chaperonin GroES.

Its subcellular location is the cytoplasm. It carries out the reaction ATP + H2O + a folded polypeptide = ADP + phosphate + an unfolded polypeptide.. In terms of biological role, together with its co-chaperonin GroES, plays an essential role in assisting protein folding. The GroEL-GroES system forms a nano-cage that allows encapsulation of the non-native substrate proteins and provides a physical environment optimized to promote and accelerate protein folding. In Bradyrhizobium diazoefficiens (strain JCM 10833 / BCRC 13528 / IAM 13628 / NBRC 14792 / USDA 110), this protein is Chaperonin GroEL 3.